The chain runs to 521 residues: Cytochrome P450 monooxygenase ARMGADRAFT_1018420 (521 aa).

A helical transmembrane segment spans residues 9–26; sequence VSPIWILTAIVVVAYTTV. Position 443 (C443) interacts with heme. A glycan (N-linked (GlcNAc...) asparagine) is linked at N450.

The protein belongs to the cytochrome P450 family. The cofactor is heme.

Its subcellular location is the membrane. It functions in the pathway secondary metabolite biosynthesis. In terms of biological role, cytochrome P450 monooxygenase, part of the gene cluster that mediates the biosynthesis of melleolides, a range of antifungal and phytotoxic polyketide derivatives composed of an orsellinic acid (OA) moiety esterified to various sesquiterpene alcohols. The first step in melleolides biosynthesis is performed by the delta(6)-protoilludene synthase PRO1 which catalyzes the cyclization of farnesyl diphosphate to protoilludene. The orsellinic acid synthase armB produces OA by condensing acetyl-CoA with 3 malonyl-CoA units in a three-round chain elongation reaction folowed by a C2-C7 ring closure. ArmB further catalyzes the trans-esterification of OA to the various sesquiterpene alcohols resulting from the hydroxylation of protoilludene. The melleolides cluster also includes 5 cytochrome P450 monooxygenases, 4 NAD(+)-dependent oxidoreductases, one flavin-dependent oxidoreductase, and one O-methyltransferase. The cytochrome P450 monooxygenases may be involved in protoilludene hydroxylation to elaborate melleolides with multiple alcohol groups, such as melleolide D, which carries alcohol functionalities at C-4, C-5, C-10, and C-13. The role of the NAD(+)-dependent enzymes remains unknown. Numerous melleolides, including arnamial, show 5'-O-methylation of the aromatic moiety which may be catalyzed by the methyltransferase encoded in the cluster. The flavin-dependent oxidoreductase might represent the dehydrogenase yielding the aldehyde in position 1 of arnamial and other melleolides. Finally, several halogenase localized outside of the cluster, are able to catalyze the transfer of a single chlorine atom to the melleolide backbone, resulting in a 6'-chloromelleolide product. This Armillaria gallica (Bulbous honey fungus) protein is Cytochrome P450 monooxygenase ARMGADRAFT_1018420.